Here is a 195-residue protein sequence, read N- to C-terminus: Imidazoleglycerol-phosphate dehydratase (195 aa).

This sequence belongs to the imidazoleglycerol-phosphate dehydratase family.

Its subcellular location is the cytoplasm. It carries out the reaction D-erythro-1-(imidazol-4-yl)glycerol 3-phosphate = 3-(imidazol-4-yl)-2-oxopropyl phosphate + H2O. Its pathway is amino-acid biosynthesis; L-histidine biosynthesis; L-histidine from 5-phospho-alpha-D-ribose 1-diphosphate: step 6/9. The protein is Imidazoleglycerol-phosphate dehydratase of Dechloromonas aromatica (strain RCB).